The sequence spans 380 residues: Probable inactive reductase easA (380 aa).

FMN-binding positions include 25-27, Ala-60, Gln-102, and His-171; that span reads PMT. His-171 and Asn-174 together coordinate substrate. FMN contacts are provided by residues Lys-223, Gly-299, 324–325, and Arg-325; that span reads GR. Tyr-352 contributes to the substrate binding site.

Belongs to the NADH:flavin oxidoreductase/NADH oxidase family.

Its function is as follows. Probable inactive dehydrogenase; part of the gene cluster that mediates the biosynthesis of fungal ergot alkaloid ergovaline, the predominant ergopeptine product in E.festucae var. lolii. DmaW catalyzes the first step of ergot alkaloid biosynthesis by condensing dimethylallyl diphosphate (DMAP) and tryptophan to form 4-dimethylallyl-L-tryptophan. The second step is catalyzed by the methyltransferase easF that methylates 4-dimethylallyl-L-tryptophan in the presence of S-adenosyl-L-methionine, resulting in the formation of 4-dimethylallyl-L-abrine. The catalase easC and the FAD-dependent oxidoreductase easE then transform 4-dimethylallyl-L-abrine to chanoclavine-I which is further oxidized by easD in the presence of NAD(+), resulting in the formation of chanoclavine-I aldehyde. Agroclavine dehydrogenase easG then mediates the conversion of chanoclavine-I aldehyde to agroclavine via a non-enzymatic adduct reaction: the substrate is an iminium intermediate that is formed spontaneously from chanoclavine-I aldehyde in the presence of glutathione. The presence of easA is not required to complete this reaction. Further conversion of agroclavine to paspalic acid is a two-step process involving oxidation of agroclavine to elymoclavine and of elymoclavine to paspalic acid, the second step being performed by the elymoclavine oxidase cloA. Paspalic acid is then further converted to D-lysergic acid. Ergovaline is assembled from D-lysergic acid and three different amino acids by the D-lysergyl-peptide-synthetase composed of a monomudular (lpsB) and a trimodular (lpsA) nonribosomal peptide synthetase subunit. The sequence is that of Probable inactive reductase easA from Epichloe festucae var. lolii (Neotyphodium lolii).